Here is a 208-residue protein sequence, read N- to C-terminus: Small ribosomal subunit protein uS3 (208 aa).

The KH type-2 domain occupies 17-86 (IDEYLEKELR…NPQIEVEEIK (70 aa)).

This sequence belongs to the universal ribosomal protein uS3 family. Part of the 30S ribosomal subunit.

Its function is as follows. Binds the lower part of the 30S subunit head. This chain is Small ribosomal subunit protein uS3, found in Thermococcus onnurineus (strain NA1).